Here is a 1510-residue protein sequence, read N- to C-terminus: Chromosome partition protein MukB (1510 aa).

An ATP-binding site is contributed by 75–82; that stretch reads GGNGAGKS. Residues 346–706 are a coiled coil; sequence QHRLVDLSRE…LDEQISRLSQ (361 aa). Positions 707–824 are flexible hinge; it reads PDGSEDPRLN…EIPLFGCAAR (118 aa). Coiled coils occupy residues 825–1154 and 1248–1304; these read EKRL…AAKV and IDAI…LQNI.

This sequence belongs to the SMC family. MukB subfamily. Homodimerization via its hinge domain. Binds to DNA via its C-terminal region. Interacts, and probably forms a ternary complex, with MukE and MukF via its C-terminal region. The complex formation is stimulated by calcium or magnesium. Interacts with tubulin-related protein FtsZ.

It localises to the cytoplasm. It is found in the nucleoid. In terms of biological role, plays a central role in chromosome condensation, segregation and cell cycle progression. Functions as a homodimer, which is essential for chromosome partition. Involved in negative DNA supercoiling in vivo, and by this means organize and compact chromosomes. May achieve or facilitate chromosome segregation by condensation DNA from both sides of a centrally located replisome during cell division. In Haemophilus influenzae (strain ATCC 51907 / DSM 11121 / KW20 / Rd), this protein is Chromosome partition protein MukB.